A 76-amino-acid chain; its full sequence is uncharacterized protein (76 aa).

2 EF-hand domains span residues glutamate 9 to asparagine 44 and glutamate 43 to serine 76.

Its subcellular location is the cytoplasm. The protein resides in the nucleus. This is an uncharacterized protein from Schizosaccharomyces pombe (strain 972 / ATCC 24843) (Fission yeast).